Reading from the N-terminus, the 266-residue chain is Glucosamine-6-phosphate deaminase (266 aa).

Asp72 serves as the catalytic Proton acceptor; for enolization step. Residue Asp141 is the For ring-opening step of the active site. His143 acts as the Proton acceptor; for ring-opening step in catalysis. Glu148 serves as the catalytic For ring-opening step.

The protein belongs to the glucosamine/galactosamine-6-phosphate isomerase family. NagB subfamily. Homohexamer; trimer of disulfide-linked dimers.

The enzyme catalyses alpha-D-glucosamine 6-phosphate + H2O = beta-D-fructose 6-phosphate + NH4(+). It functions in the pathway amino-sugar metabolism; N-acetylneuraminate degradation; D-fructose 6-phosphate from N-acetylneuraminate: step 5/5. Allosterically activated by N-acetylglucosamine 6-phosphate (GlcNAc6P). In terms of biological role, catalyzes the reversible isomerization-deamination of glucosamine 6-phosphate (GlcN6P) to form fructose 6-phosphate (Fru6P) and ammonium ion. The protein is Glucosamine-6-phosphate deaminase of Shigella boydii serotype 18 (strain CDC 3083-94 / BS512).